Here is a 169-residue protein sequence, read N- to C-terminus: Disulfide bond formation protein B (169 aa).

At 1–14 the chain is on the cytoplasmic side; it reads MNNLTLSLRRERRL. Residues 15–31 traverse the membrane as a helical segment; sequence LVLLALVCLALLAGALY. The Periplasmic portion of the chain corresponds to 32-49; it reads LQYVKNEDPCPLCIIQRY. An intrachain disulfide couples cysteine 41 to cysteine 44. A helical transmembrane segment spans residues 50–64; it reads FFVLIAVFAFIGAGM. Topologically, residues 65-71 are cytoplasmic; it reads ASGAGVA. Residues 72 to 89 traverse the membrane as a helical segment; it reads VTEALIVLSAAAGVGTAA. Over 90–144 the chain is Periplasmic; that stretch reads RHLYVQLNPGFSCGFDALQPVVDSLPPARWLPGVFKVAGLCETVYPPIFGILLPG. Cysteine 102 and cysteine 130 are joined by a disulfide. Residues 145–163 traverse the membrane as a helical segment; it reads WALIAFVLIAVPVAVSLLR. The Cytoplasmic portion of the chain corresponds to 164–169; that stretch reads HRGRLR.

The protein belongs to the DsbB family.

It is found in the cell inner membrane. In terms of biological role, required for disulfide bond formation in some periplasmic proteins. Acts by oxidizing the DsbA protein. The chain is Disulfide bond formation protein B from Burkholderia mallei (strain ATCC 23344).